The primary structure comprises 391 residues: MAEDGSPKIYSRPPRDNSKTPTEADIFFGADNTIPKSETTITSEGDHVTSVNDCTPDGDFSTTVNKLTPTKEKLKLEDDIEGCLKLTTLPEKEITTPTETPNSKPKGSITENFIPVKIGNTSSPVGTVSLIDFSSNTAKEDIFLTTIDTGEKEVVPTTEFSGTLEDSAADVEDASGFPDESTETDVPSSATSDAPDDGAVQVTDSFSPEAGVPPSTEKEVTTIPDITNIAEENVTEIKLIVSEDRPKTVTKLSDSEEEKFITVFELTNSAEKAKDNVEDPLNDEESTDGANDWMEKETASEAESHAVLLTAVESRYDFIVTASETDNVMEESHVNTTDLPENETTESVTNVTEELPSVTSIVDTLKDKEDLSTTNSGLFKLLKEEPDDLMM.

Disordered stretches follow at residues 1–23 (MAEDGSPKIYSRPPRDNSKTPTE), 90–110 (PEKEITTPTETPNSKPKGSIT), and 152–221 (KEVV…KEVT). Low complexity predominate over residues 90–101 (PEKEITTPTETP). Phosphoserine is present on residues S253 and S269. The segment at 271 to 299 (EKAKDNVEDPLNDEESTDGANDWMEKETA) is disordered. Positions 278–287 (EDPLNDEEST) are enriched in acidic residues. A phosphoserine mark is found at S314, S347, S357, S372, and S376. The disordered stretch occupies residues 330 to 351 (EESHVNTTDLPENETTESVTNV).

In terms of tissue distribution, detected only in testis. Expressed from stages X to VIII of the seminiferous epithelial cycle. Expressed from step 13 to step 16 of spermatid development (at protein level).

Its subcellular location is the cytoplasm. It is found in the mitochondrion inner membrane. It localises to the cell projection. The protein localises to the cilium. The protein resides in the flagellum. Its subcellular location is the cytoplasmic vesicle. It is found in the secretory vesicle. It localises to the acrosome. Its function is as follows. Calcium-binding protein. Essential for maintaining the structural integrity of the sperm flagella. The chain is Calcium-binding and spermatid-specific protein 1 (Cabs1) from Mus musculus (Mouse).